The sequence spans 248 residues: tRNA (guanine-N(1)-)-methyltransferase (248 aa).

Residues Gly-113 and 133-138 (LGDFVL) contribute to the S-adenosyl-L-methionine site.

Belongs to the RNA methyltransferase TrmD family. As to quaternary structure, homodimer.

The protein localises to the cytoplasm. It catalyses the reaction guanosine(37) in tRNA + S-adenosyl-L-methionine = N(1)-methylguanosine(37) in tRNA + S-adenosyl-L-homocysteine + H(+). Functionally, specifically methylates guanosine-37 in various tRNAs. This chain is tRNA (guanine-N(1)-)-methyltransferase, found in Albidiferax ferrireducens (strain ATCC BAA-621 / DSM 15236 / T118) (Rhodoferax ferrireducens).